The sequence spans 274 residues: Triosephosphate isomerase (274 aa).

13 to 15 is a substrate binding site; sequence NWK. Residue His-98 is the Electrophile of the active site. The active-site Proton acceptor is Glu-170. Gly-176 and Ser-216 together coordinate substrate.

The protein belongs to the triosephosphate isomerase family. Homodimer.

Its subcellular location is the cytoplasm. The catalysed reaction is D-glyceraldehyde 3-phosphate = dihydroxyacetone phosphate. It functions in the pathway carbohydrate biosynthesis; gluconeogenesis. Its pathway is carbohydrate degradation; glycolysis; D-glyceraldehyde 3-phosphate from glycerone phosphate: step 1/1. In terms of biological role, involved in the gluconeogenesis. Catalyzes stereospecifically the conversion of dihydroxyacetone phosphate (DHAP) to D-glyceraldehyde-3-phosphate (G3P). This is Triosephosphate isomerase from Aster yellows witches'-broom phytoplasma (strain AYWB).